The sequence spans 362 residues: Peptide chain release factor 1 (362 aa).

Residue Gln235 is modified to N5-methylglutamine.

Belongs to the prokaryotic/mitochondrial release factor family. Post-translationally, methylated by PrmC. Methylation increases the termination efficiency of RF1.

Its subcellular location is the cytoplasm. In terms of biological role, peptide chain release factor 1 directs the termination of translation in response to the peptide chain termination codons UAG and UAA. This is Peptide chain release factor 1 from Acinetobacter baumannii (strain AYE).